The sequence spans 169 residues: Allophycocyanin subunit beta-18 (169 aa).

N72 carries the post-translational modification N4-methylasparagine. C82 serves as a coordination point for (2R,3E)-phycocyanobilin.

This sequence belongs to the phycobiliprotein family. As to quaternary structure, heterodimer of an alpha and a beta chain. Post-translationally, contains one covalently linked phycocyanobilin chromophore.

The protein resides in the plastid. It is found in the cyanelle thylakoid membrane. In terms of biological role, light-harvesting photosynthetic bile pigment-protein from the phycobiliprotein complex. Allophycocyanin has a maximum absorption at approximately 650 nanometers. The chain is Allophycocyanin subunit beta-18 (apcF) from Cyanophora paradoxa.